Reading from the N-terminus, the 90-residue chain is Small ribosomal subunit protein uS15c (90 aa).

It belongs to the universal ribosomal protein uS15 family. In terms of assembly, part of the 30S ribosomal subunit.

The protein resides in the plastid. It is found in the chloroplast. This Nandina domestica (Heavenly bamboo) protein is Small ribosomal subunit protein uS15c (rps15).